The chain runs to 120 residues: Large ribosomal subunit protein uL18 (120 aa).

It belongs to the universal ribosomal protein uL18 family. In terms of assembly, part of the 50S ribosomal subunit; part of the 5S rRNA/L5/L18/L25 subcomplex. Contacts the 5S and 23S rRNAs.

This is one of the proteins that bind and probably mediate the attachment of the 5S RNA into the large ribosomal subunit, where it forms part of the central protuberance. The chain is Large ribosomal subunit protein uL18 from Rhizobium rhizogenes (strain K84 / ATCC BAA-868) (Agrobacterium radiobacter).